A 296-amino-acid polypeptide reads, in one-letter code: Glycine--tRNA ligase alpha subunit (296 aa).

This sequence belongs to the class-II aminoacyl-tRNA synthetase family. In terms of assembly, tetramer of two alpha and two beta subunits.

It localises to the cytoplasm. It carries out the reaction tRNA(Gly) + glycine + ATP = glycyl-tRNA(Gly) + AMP + diphosphate. The sequence is that of Glycine--tRNA ligase alpha subunit from Listeria welshimeri serovar 6b (strain ATCC 35897 / DSM 20650 / CCUG 15529 / CIP 8149 / NCTC 11857 / SLCC 5334 / V8).